The chain runs to 132 residues: Fumarate reductase subunit C (132 aa).

3 consecutive transmembrane segments (helical) span residues 36–56 (AIPT…LGSL), 70–90 (IVII…VTYY), and 110–130 (IITM…LVFM).

The protein belongs to the FrdC family. Part of an enzyme complex containing four subunits: a flavoprotein (FrdA), an iron-sulfur protein (FrdB), and two hydrophobic anchor proteins (FrdC and FrdD).

Its subcellular location is the cell inner membrane. Anchors the catalytic components of the fumarate reductase complex to the cell membrane, binds quinones. The polypeptide is Fumarate reductase subunit C (Pasteurella multocida (strain Pm70)).